The sequence spans 295 residues: 3-methyl-2-oxobutanoate hydroxymethyltransferase (295 aa).

A disordered region spans residues M1–A30. Mg(2+) contacts are provided by D76 and D115. 3-methyl-2-oxobutanoate is bound by residues D76–S77, D115, and K145. E147 contributes to the Mg(2+) binding site. E213 acts as the Proton acceptor in catalysis.

The protein belongs to the PanB family. Homodecamer; pentamer of dimers. Requires Mg(2+) as cofactor.

Its subcellular location is the cytoplasm. It carries out the reaction 3-methyl-2-oxobutanoate + (6R)-5,10-methylene-5,6,7,8-tetrahydrofolate + H2O = 2-dehydropantoate + (6S)-5,6,7,8-tetrahydrofolate. The protein operates within cofactor biosynthesis; (R)-pantothenate biosynthesis; (R)-pantoate from 3-methyl-2-oxobutanoate: step 1/2. Functionally, catalyzes the reversible reaction in which hydroxymethyl group from 5,10-methylenetetrahydrofolate is transferred onto alpha-ketoisovalerate to form ketopantoate. This is 3-methyl-2-oxobutanoate hydroxymethyltransferase from Nocardioides sp. (strain ATCC BAA-499 / JS614).